Reading from the N-terminus, the 495-residue chain is Cobyric acid synthase (495 aa).

One can recognise a GATase cobBQ-type domain in the interval Gly258–Phe427. Cys339 serves as the catalytic Nucleophile. Residue His419 is part of the active site.

Belongs to the CobB/CobQ family. CobQ subfamily.

It participates in cofactor biosynthesis; adenosylcobalamin biosynthesis. In terms of biological role, catalyzes amidations at positions B, D, E, and G on adenosylcobyrinic A,C-diamide. NH(2) groups are provided by glutamine, and one molecule of ATP is hydrogenolyzed for each amidation. This chain is Cobyric acid synthase, found in Mycobacterium sp. (strain KMS).